The sequence spans 187 residues: Peptide deformylase (187 aa).

Residues cysteine 107 and histidine 149 each contribute to the Fe cation site. Glutamate 150 is an active-site residue. Position 153 (histidine 153) interacts with Fe cation.

Belongs to the polypeptide deformylase family. The cofactor is Fe(2+).

The catalysed reaction is N-terminal N-formyl-L-methionyl-[peptide] + H2O = N-terminal L-methionyl-[peptide] + formate. Removes the formyl group from the N-terminal Met of newly synthesized proteins. Requires at least a dipeptide for an efficient rate of reaction. N-terminal L-methionine is a prerequisite for activity but the enzyme has broad specificity at other positions. The chain is Peptide deformylase from Microchaete diplosiphon (Fremyella diplosiphon).